The chain runs to 443 residues: MSAMTPREIVSELNRFIIGQDGAKRAVAIALRNRWRRMQLDEELRHEVTPKNILMIGPTGVGKTEIARRLAKLANAPFIKVEATKFTEVGYVGKEVDSIIRDLTDSAIKMVRSQAIDRNRNRAEEMAEERILDVLIPPAKNNWGQNETPAEPSSARQSFRKKLREGQLDDKEIEIDLAAISGGVEIMAPPGMEEMTSQLQSMFQNIGGQKQKPRKLKIKEAMKLLVEEEAAKLVNQEELKQEAIDAVEQHGIVFIDEIDKVCKRGESSGPDVSREGVQRDLLPLVEGCTVSTKHGMVKTDHILFIASGAFQVASPSDLIPELQGRLPIRVELQALTTNDFERILTEPSASITVQYKALMNTEGVNITFTPDGISKIAAAAWQVNETAENIGARRLHTVLERLMEEISYDASDLNGQSITIDAEYVSKHLDELVADEDLSRFIL.

ATP is bound by residues Ile18 and 60–65; that span reads GVGKTE. Positions 139 to 158 are disordered; it reads AKNNWGQNETPAEPSSARQS. The ATP site is built by Asp256, Glu321, and Arg393.

It belongs to the ClpX chaperone family. HslU subfamily. As to quaternary structure, a double ring-shaped homohexamer of HslV is capped on each side by a ring-shaped HslU homohexamer. The assembly of the HslU/HslV complex is dependent on binding of ATP.

It is found in the cytoplasm. Its function is as follows. ATPase subunit of a proteasome-like degradation complex; this subunit has chaperone activity. The binding of ATP and its subsequent hydrolysis by HslU are essential for unfolding of protein substrates subsequently hydrolyzed by HslV. HslU recognizes the N-terminal part of its protein substrates and unfolds these before they are guided to HslV for hydrolysis. The polypeptide is ATP-dependent protease ATPase subunit HslU (Erwinia tasmaniensis (strain DSM 17950 / CFBP 7177 / CIP 109463 / NCPPB 4357 / Et1/99)).